Reading from the N-terminus, the 232-residue chain is Noggin (232 aa).

A signal peptide spans 1 to 27; the sequence is MERCPSLGVTLYALVVVLGLRAAPAGG. N-linked (GlcNAc...) asparagine glycosylation occurs at Asn62. The interval 77 to 99 is disordered; it reads GFMATSPPEDRPGGGGGPAGGAE. Disulfide bonds link Cys155/Cys192, Cys178/Cys228, Cys184/Cys230, and Cys207/Cys215.

Belongs to the noggin family. Homodimer. Interacts with GDF5; inhibits chondrocyte differentiation. Expressed in condensing cartilage and immature chondrocytes.

It is found in the secreted. Its function is as follows. Essential for cartilage morphogenesis and joint formation. Inhibitor of bone morphogenetic proteins (BMP) signaling which is required for growth and patterning of the neural tube and somite. Inhibits chondrocyte differentiation through its interaction with GDF5 and, probably, GDF6. This Mus musculus (Mouse) protein is Noggin (Nog).